We begin with the raw amino-acid sequence, 300 residues long: Ribosomal protein bS6--L-glutamate ligase (300 aa).

Residues 104 to 287 enclose the ATP-grasp domain; it reads MQLLARQGID…IASKMIRWIE (184 aa). ATP is bound by residues lysine 141, 178–179, aspartate 187, and 211–213; these read EY and RSN. Residues aspartate 248, glutamate 260, and asparagine 262 each coordinate Mg(2+). Aspartate 248, glutamate 260, and asparagine 262 together coordinate Mn(2+).

This sequence belongs to the RimK family. It depends on Mg(2+) as a cofactor. Mn(2+) is required as a cofactor.

In terms of biological role, an L-glutamate ligase that catalyzes the ATP-dependent post-translational addition of glutamate residues to the C-terminus of ribosomal protein bS6 (RpsF). Is also able to catalyze the synthesis of poly-alpha-glutamate in vitro, via ATP hydrolysis from unprotected glutamate as substrate. The number of glutamate residues added to either RpsF or to poly-alpha-glutamate changes with pH. The protein is Ribosomal protein bS6--L-glutamate ligase of Escherichia coli O81 (strain ED1a).